Reading from the N-terminus, the 302-residue chain is uncharacterized protein (302 aa).

The N-terminal stretch at 1–28 is a signal peptide; the sequence is MNKLTAQNLLKKSRFLKYSLLTSISVGA.

This is an uncharacterized protein from Rickettsia prowazekii (strain Madrid E).